The following is a 329-amino-acid chain: Acetoacetyl CoA synthase NphT7 (329 aa).

Active-site residues include Cys115, His256, and Asn286.

It belongs to the thiolase-like superfamily. FabH family. In terms of assembly, homodimer.

It localises to the cytoplasm. The enzyme catalyses malonyl-CoA + acetyl-CoA + H(+) = acetoacetyl-CoA + CO2 + CoA. Its pathway is metabolic intermediate biosynthesis; (R)-mevalonate biosynthesis. In terms of biological role, catalyzes the condensation of acetyl-CoA and malonyl-CoA to form acetoacetyl-CoA and CoA. Does not accept malonyl-[acyl-carrier-protein] as a substrate. Can also convert malonyl-CoA into acetyl-CoA via decarboxylation of malonyl-CoA. This chain is Acetoacetyl CoA synthase NphT7 (nphT7), found in Streptomyces sp. (strain CL190).